The primary structure comprises 202 residues: Ras-related protein Rab-2B (202 aa).

Position 31–38 (31–38 (GDSAVGKS)) interacts with GTP. An Effector region motif is present at residues 53–61 (SDFTIGVEF). Residues 79-83 (DTAGQ) and 137-140 (NKAD) each bind GTP.

Belongs to the small GTPase superfamily. Rab family. This sequence lacks the C-terminal cysteine motifs subject to isoprenylation in other Rab proteins.

The sequence is that of Ras-related protein Rab-2B (rab2B) from Dictyostelium discoideum (Social amoeba).